Consider the following 404-residue polypeptide: Activity-regulated cytoskeleton-associated protein (404 aa).

Residues 51-78 are a coiled coil; sequence EVSKQVERELKGLQKSVGKLENNLEDHV. The interval 351–404 is disordered; it reads VQGNMDHSEEPSPQRTPEIQSGDSVESMPPSTTASPVPSNGTQPEPPSPPATVI. The span at 363–393 shows a compositional bias: polar residues; sequence PQRTPEIQSGDSVESMPPSTTASPVPSNGTQ. The span at 394–404 shows a compositional bias: pro residues; the sequence is PEPPSPPATVI.

This sequence belongs to the ARC/ARG3.1 family. Homooligomer; homooligomerizes into virion-like capsids. Post-translationally, palmitoylation anchors the protein into the membrane by allowing direct insertion into the hydrophobic core of the lipid bilayer. Expressed at various levels throughout the brain.

It is found in the extracellular vesicle membrane. It localises to the postsynaptic cell membrane. The protein resides in the synapse. The protein localises to the postsynaptic density. Its subcellular location is the early endosome membrane. It is found in the cell projection. It localises to the dendrite. The protein resides in the cytoplasm. The protein localises to the cytoskeleton. Its subcellular location is the cell cortex. It is found in the dendritic spine. In terms of biological role, master regulator of synaptic plasticity that self-assembles into virion-like capsids that encapsulate RNAs and mediate intercellular RNA transfer in the nervous system. ARC protein is released from neurons in extracellular vesicles that mediate the transfer of ARC mRNA into new target cells, where ARC mRNA can undergo activity-dependent translation. ARC capsids are endocytosed and are able to transfer ARC mRNA into the cytoplasm of neurons. Acts as a key regulator of synaptic plasticity: required for protein synthesis-dependent forms of long-term potentiation (LTP) and depression (LTD) and for the formation of long-term memory. Regulates synaptic plasticity by promoting endocytosis of AMPA receptors (AMPARs) in response to synaptic activity: this endocytic pathway maintains levels of surface AMPARs in response to chronic changes in neuronal activity through synaptic scaling, thereby contributing to neuronal homeostasis. Acts as a postsynaptic mediator of activity-dependent synapse elimination in the developing cerebellum by mediating elimination of surplus climbing fiber synapses. Accumulates at weaker synapses, probably to prevent their undesired enhancement. This suggests that ARC-containing virion-like capsids may be required to eliminate synaptic material. The protein is Activity-regulated cytoskeleton-associated protein of Gallus gallus (Chicken).